A 526-amino-acid polypeptide reads, in one-letter code: Peptide chain release factor 3 (526 aa).

Residues 8–277 (NKRRTFAIIS…GLTQWAPAPQ (270 aa)) form the tr-type G domain. Residues 17–24 (SHPDAGKT), 85–89 (DTPGH), and 139–142 (NKLD) contribute to the GTP site.

Belongs to the TRAFAC class translation factor GTPase superfamily. Classic translation factor GTPase family. PrfC subfamily.

The protein resides in the cytoplasm. In terms of biological role, increases the formation of ribosomal termination complexes and stimulates activities of RF-1 and RF-2. It binds guanine nucleotides and has strong preference for UGA stop codons. It may interact directly with the ribosome. The stimulation of RF-1 and RF-2 is significantly reduced by GTP and GDP, but not by GMP. The sequence is that of Peptide chain release factor 3 from Histophilus somni (strain 2336) (Haemophilus somnus).